Reading from the N-terminus, the 131-residue chain is Transcription antitermination protein NusB (131 aa).

This sequence belongs to the NusB family.

Its function is as follows. Involved in transcription antitermination. Required for transcription of ribosomal RNA (rRNA) genes. Binds specifically to the boxA antiterminator sequence of the ribosomal RNA (rrn) operons. This Bacillus pumilus (strain SAFR-032) protein is Transcription antitermination protein NusB.